Here is a 141-residue protein sequence, read N- to C-terminus: MAIILGADAHGNALKELIKSFLQEEGYDIIDVTDINSDFIDNTLAVAKAINEAEGRLGIMVDAYGAGPFMVATKLKGMVAAEVSDERSAYMTRGHNNARMITIGAEIVGPELAKNIVKGFVTGPYDGGRHQIRVDMLNKMA.

This sequence belongs to the LacAB/RpiB family. As to quaternary structure, heteromultimeric protein consisting of LacA and LacB.

The enzyme catalyses aldehydo-D-galactose 6-phosphate = keto-D-tagatose 6-phosphate. Its pathway is carbohydrate metabolism; D-galactose 6-phosphate degradation; D-tagatose 6-phosphate from D-galactose 6-phosphate: step 1/1. The chain is Galactose-6-phosphate isomerase subunit LacA 1 from Streptococcus pyogenes serotype M6 (strain ATCC BAA-946 / MGAS10394).